The following is a 211-amino-acid chain: Arginine exporter protein ArgO (211 aa).

A run of 6 helical transmembrane segments spans residues 1-21, 37-57, 68-88, 111-131, 147-167, and 179-199; these read MISYYFQGFALGAAMILPLGP, LMIALLCALSDLVLISAGIFG, LLALVTWGGVAFLLWYGFGAL, IIATMLAVTWLNPHVYLDTFV, WFALGTISASFLWFFGLALLA, and AQRIINILVGVVMWLIAFQLA.

The protein belongs to the LysE/ArgO transporter (TC 2.A.75) family.

The protein resides in the cell inner membrane. It catalyses the reaction L-arginine(in) = L-arginine(out). In terms of biological role, involved in the export of arginine. Important to control the intracellular level of arginine and the correct balance between arginine and lysine. This is Arginine exporter protein ArgO from Salmonella choleraesuis (strain SC-B67).